A 57-amino-acid polypeptide reads, in one-letter code: DNA-directed RNA polymerase subunit Rpo6 (57 aa).

It belongs to the archaeal Rpo6/eukaryotic RPB6 RNA polymerase subunit family. As to quaternary structure, part of the RNA polymerase complex.

The protein localises to the cytoplasm. The catalysed reaction is RNA(n) + a ribonucleoside 5'-triphosphate = RNA(n+1) + diphosphate. In terms of biological role, DNA-dependent RNA polymerase (RNAP) catalyzes the transcription of DNA into RNA using the four ribonucleoside triphosphates as substrates. The sequence is that of DNA-directed RNA polymerase subunit Rpo6 from Haloarcula marismortui (strain ATCC 43049 / DSM 3752 / JCM 8966 / VKM B-1809) (Halobacterium marismortui).